The chain runs to 475 residues: uncharacterized protein (475 aa).

To E.coli YihN.

This is an uncharacterized protein from Mycoplasma pneumoniae (strain ATCC 29342 / M129 / Subtype 1) (Mycoplasmoides pneumoniae).